A 438-amino-acid chain; its full sequence is MSAESLLHNTFSTEQIEVLENEYAAHNYHPLPVCFSKAKGAKVWDPEGREYLDFLSAYSAVNQGHCHPKIIEALVEQAQRVTLSSRAFYNDKFGPFAKYITEYFGYEMVIPMNTGAEAVETACKLARLWGYKAKKIPTDEAIILSCVDNFHGRTMGIISMSTDPDARDNYGPYLPNVGPKISGADRVLRYNNIEDLKYYLDTFGPKVAAFLVEPIQGEAGVMVPDDGYLEEAYKLCKAHNVLFIADEVQTGVARTGKMLCIEHSNVKPDVVILGKAISGGVYPVSAVLSSREIMLNFEPGTHGSTYGGNPLGAAVSIAALEVVKEEKLTERAAVLGEKFRTALIECKSPIVQKVRGRGLLNAVVIDESKTNGRTAWDLCLIMRSRGVLAKPTHGNIIRFSPPLVITEEDLMKGIEVIKKSLNDLPTIDMTPYAEKPIH.

Position 275 is an N6-(pyridoxal phosphate)lysine (Lys-275).

Belongs to the class-III pyridoxal-phosphate-dependent aminotransferase family. Requires pyridoxal 5'-phosphate as cofactor.

It localises to the cytoplasm. Its subcellular location is the nucleus. The enzyme catalyses a 2-oxocarboxylate + L-ornithine = L-glutamate 5-semialdehyde + an L-alpha-amino acid. Its pathway is amino-acid biosynthesis; L-proline biosynthesis; L-glutamate 5-semialdehyde from L-ornithine: step 1/1. This Schizosaccharomyces pombe (strain 972 / ATCC 24843) (Fission yeast) protein is Ornithine aminotransferase car2 (car2).